Here is a 215-residue protein sequence, read N- to C-terminus: Thymidylate kinase (215 aa).

10–17 (GGEGVGKT) is an ATP binding site.

Belongs to the thymidylate kinase family.

The catalysed reaction is dTMP + ATP = dTDP + ADP. Functionally, phosphorylation of dTMP to form dTDP in both de novo and salvage pathways of dTTP synthesis. This is Thymidylate kinase from Bartonella henselae (strain ATCC 49882 / DSM 28221 / CCUG 30454 / Houston 1) (Rochalimaea henselae).